The primary structure comprises 158 residues: C-type lectin galactose-binding isoform (158 aa).

The signal sequence occupies residues 1–23 (MGRFLLVTLSLLVMAFFLNGANS). 3 disulfides stabilise this stretch: Cys26/Cys37, Cys54/Cys154, and Cys129/Cys146. The C-type lectin domain occupies 33–155 (RNGFCYKVFN…CTALRPFLCQ (123 aa)). Ca(2+)-binding residues include Gln119, Asp121, and Glu127. A Galactose-binding motif is present at residues 119–121 (QPD). Asn134 is a glycosylation site (N-linked (GlcNAc...) asparagine). Residues Asn142 and Asp143 each coordinate Ca(2+).

This sequence belongs to the true venom lectin family. In terms of assembly, dimer. Probably disulfide-linked homodimer. Expressed by the venom gland.

The protein localises to the secreted. Its function is as follows. Galactose-binding lectin that binds to and agglutinates erythrocytes in a calcium-dependent manner. The protein is C-type lectin galactose-binding isoform of Pseudechis australis (Mulga snake).